Reading from the N-terminus, the 178-residue chain is uncharacterized protein (178 aa).

Transmembrane regions (helical) follow at residues 13 to 33, 48 to 68, 80 to 100, 115 to 135, and 155 to 175; these read GIVL…FFMP, MLNA…LIMI, ILAA…YHSI, IYFF…PLAL, and WTMP…LMIS.

Its subcellular location is the cell membrane. This is an uncharacterized protein from Bacillus subtilis (strain 168).